The following is a 73-amino-acid chain: Protein SlyX homolog (73 aa).

The protein belongs to the SlyX family.

The protein is Protein SlyX homolog of Histophilus somni (strain 129Pt) (Haemophilus somnus).